The primary structure comprises 176 residues: Adenine phosphoribosyltransferase (176 aa).

It belongs to the purine/pyrimidine phosphoribosyltransferase family. In terms of assembly, homodimer.

The protein localises to the cytoplasm. The enzyme catalyses AMP + diphosphate = 5-phospho-alpha-D-ribose 1-diphosphate + adenine. The protein operates within purine metabolism; AMP biosynthesis via salvage pathway; AMP from adenine: step 1/1. Catalyzes a salvage reaction resulting in the formation of AMP, that is energically less costly than de novo synthesis. This is Adenine phosphoribosyltransferase from Methylobacillus flagellatus (strain ATCC 51484 / DSM 6875 / VKM B-1610 / KT).